Consider the following 605-residue polypeptide: Methyl-CpG-binding domain protein 1 (605 aa).

Positions 1–69 constitute an MBD domain; that stretch reads MAEDWLDCPA…TLFDFKQGIL (69 aa). The interval 80 to 123 is disordered; the sequence is AVASKKRKKPSRPAKTRKRQVGPQSGEVRKEAPRDETKADTDTA. The segment covering 83 to 99 has biased composition (basic residues); that stretch reads SKKRKKPSRPAKTRKRQ. The Nuclear localization signal motif lies at 84–88; sequence KKRKK. A compositionally biased stretch (basic and acidic residues) spans 106-120; sequence EVRKEAPRDETKADT. K117 is covalently cross-linked (Glycyl lysine isopeptide (Lys-Gly) (interchain with G-Cter in SUMO2)). 2 consecutive CXXC-type zinc fingers follow at residues 169–216 and 217–263; these read RMFK…RRCL and RIVE…RRCL. Zn(2+) contacts are provided by C176, C179, C182, C188, C191, C194, C210, C215, C225, C228, C231, C237, C240, C243, C257, and C262. Residues 269–308 are disordered; sequence RRKGGCDSKMAARRRPGAQPLPPPPPSQSPEPTEPHPRAL. Residue K277 forms a Glycyl lysine isopeptide (Lys-Gly) (interchain with G-Cter in SUMO2) linkage. Positions 287–297 are enriched in pro residues; that stretch reads QPLPPPPPSQS. S297 is modified (phosphoserine). The CXXC-type 3 zinc finger occupies 330-378; it reads TNRRQNRKCGACAACLRRMDCGRCDFCCDKPKFGGSNQKRQKCRWRQCL. Residues C338, C341, C344, C350, C353, C356, C372, and C377 each contribute to the Zn(2+) site. Phosphoserine occurs at positions 391 and 399. The segment at 391 to 451 is disordered; sequence SESEDGAGSP…EAGGGFVLPP (61 aa). Over residues 403-417 the composition is skewed to basic residues; sequence YRRRKRPSSARRHHL. A Glycyl lysine isopeptide (Lys-Gly) (interchain with G-Cter in SUMO2) cross-link involves residue K422. Residues 426–439 are compositionally biased toward polar residues; the sequence is ATRTAQPDHTQAPT. Residue K440 forms a Glycyl lysine isopeptide (Lys-Gly) (interchain with G-Cter in SUMO2) linkage. Glycyl lysine isopeptide (Lys-Gly) (interchain with G-Cter in SUMO2); alternate cross-links involve residues K499 and K538. The segment at 520–573 is disordered; that stretch reads VLVPGCPSKAVDPGLPSVKQEPPDPEEDKEENKDDSASKLAPEEEAGGAGTPVI. A transcriptional repression domain (TRD) region spans residues 529–592; it reads AVDPGLPSVK…RFRDTAVWLP (64 aa). K558 participates in a covalent cross-link: Glycyl lysine isopeptide (Lys-Gly) (interchain with G-Cter in SUMO2).

Interacts with OASL, ATF7IP, ATF7IP2 and BAHD1. Binds CHAF1A and the SUV39H1-CBX5 complex via the MBD domain. Binds MGP via the TRD domain. May be part of the MeCP1 complex. Post-translationally, sumoylated, sumoylation may increase interaction with ATF7IP. In terms of tissue distribution, widely expressed.

The protein resides in the nucleus. It is found in the nucleus matrix. Its subcellular location is the nucleus speckle. The protein localises to the chromosome. Its function is as follows. Transcriptional repressor that binds CpG islands in promoters where the DNA is methylated at position 5 of cytosine within CpG dinucleotides. Binding is abolished by the presence of 7-mG that is produced by DNA damage by methylmethanesulfonate (MMS). Acts as transcriptional repressor and plays a role in gene silencing by recruiting ATF7IP, which in turn recruits factors such as the histone methyltransferase SETDB1. Probably forms a complex with SETDB1 and ATF7IP that represses transcription and couples DNA methylation and histone 'Lys-9' trimethylation. Isoform 1 and isoform 2 can also repress transcription from unmethylated promoters. This chain is Methyl-CpG-binding domain protein 1, found in Homo sapiens (Human).